The chain runs to 424 residues: Tubulin-specific chaperone cofactor E-like protein (424 aa).

2 positions are modified to phosphoserine: serine 18 and serine 41. 7 LRR repeats span residues 73 to 98 (CAHVSELDLSDNKLEDWHEVSKIVSN), 99 to 123 (VPQLEFLNLSSNPLNLSVLERTCAG), 124 to 147 (SFSGVRKLVLNNSKASWETVHMIL), 150 to 172 (LPDLEELFLCLNDYETVSCPSIC), 173 to 197 (CHSLKLLHITDNNLQDWTEIRKLGV), 199 to 224 (FPSLDTLVLANNHLNAIEEPDDSLAR), and 226 to 250 (FPNLRSISLHKSGLQSWEDIDKLNS). The 42-residue stretch at 262-303 (IPLLQPYTTEERRKLVIARLPSVSKLNGSVVTDGEREDSERF) folds into the LRRCT domain. Residues 334–424 (AEVDLRPQSS…DKIYVESKTK (91 aa)) form the Ubiquitin-like domain. Positions 349–375 (HFNDQVEEMSIRLDQTVAELKKQLKTL) form a coiled coil.

Abundantly expressed in testis, but is also present in several tissues at a much lower level.

Its subcellular location is the cytoplasm. It is found in the cytoskeleton. Functionally, acts as a regulator of tubulin stability. The protein is Tubulin-specific chaperone cofactor E-like protein (TBCEL) of Homo sapiens (Human).